A 339-amino-acid polypeptide reads, in one-letter code: MESLLQKVYDQENLTKAEMNILATEIFEGRLSKTKMAAFLMALKVKGETAEEMAGIAEAMQEVAIQVAFPAGTAMDNCGTGGDKSNSFNISTTSAFVLAAAGIPVAKHGNRSISSRSGSADVCQELGIDINMRPEDMTYLLEKVGIAFLFAPHVHPNMKYVMDVRKELGTPTIFNLIGPLTNPVHLETQLMGIYRRDLLKQTAEVLGQLGRKRAVVLNGAGFMDEASLAGENHYALYESGEVQLFTLSPEEVGLANYPLEAIRGGDAKENAAILRSVLEGEPGAHLDTVLLNAGFGLFASGKVATVKEGVNLARDLVRSGLAKQKLADLITYQKEVLTK.

Residues glycine 79, 82–83 (GD), serine 87, 89–92 (NIST), 107–115 (KHGNRSISS), and serine 119 contribute to the 5-phospho-alpha-D-ribose 1-diphosphate site. Glycine 79 contacts anthranilate. Residue serine 91 participates in Mg(2+) binding. Position 110 (asparagine 110) interacts with anthranilate. An anthranilate-binding site is contributed by arginine 165. 2 residues coordinate Mg(2+): aspartate 224 and glutamate 225.

The protein belongs to the anthranilate phosphoribosyltransferase family. As to quaternary structure, homodimer. It depends on Mg(2+) as a cofactor.

It catalyses the reaction N-(5-phospho-beta-D-ribosyl)anthranilate + diphosphate = 5-phospho-alpha-D-ribose 1-diphosphate + anthranilate. It participates in amino-acid biosynthesis; L-tryptophan biosynthesis; L-tryptophan from chorismate: step 2/5. Functionally, catalyzes the transfer of the phosphoribosyl group of 5-phosphorylribose-1-pyrophosphate (PRPP) to anthranilate to yield N-(5'-phosphoribosyl)-anthranilate (PRA). The protein is Anthranilate phosphoribosyltransferase of Listeria welshimeri serovar 6b (strain ATCC 35897 / DSM 20650 / CCUG 15529 / CIP 8149 / NCTC 11857 / SLCC 5334 / V8).